Reading from the N-terminus, the 338-residue chain is Methionine import ATP-binding protein MetN 2 (338 aa).

The ABC transporter domain occupies 2-242 (IQLEGVSVDF…PQHAFTRQLV (241 aa)). 39–46 (GTSGAGKS) contacts ATP.

It belongs to the ABC transporter superfamily. Methionine importer (TC 3.A.1.24) family. In terms of assembly, the complex is composed of two ATP-binding proteins (MetN), two transmembrane proteins (MetI) and a solute-binding protein (MetQ).

It localises to the cell inner membrane. The enzyme catalyses L-methionine(out) + ATP + H2O = L-methionine(in) + ADP + phosphate + H(+). The catalysed reaction is D-methionine(out) + ATP + H2O = D-methionine(in) + ADP + phosphate + H(+). Part of the ABC transporter complex MetNIQ involved in methionine import. Responsible for energy coupling to the transport system. The sequence is that of Methionine import ATP-binding protein MetN 2 from Pectobacterium atrosepticum (strain SCRI 1043 / ATCC BAA-672) (Erwinia carotovora subsp. atroseptica).